A 245-amino-acid chain; its full sequence is Probable phosphatase Teth514_1060 (245 aa).

Positions 8, 10, 16, 41, 74, 102, 133, 194, and 196 each coordinate Zn(2+).

This sequence belongs to the PHP family. Zn(2+) serves as cofactor.

In Thermoanaerobacter sp. (strain X514), this protein is Probable phosphatase Teth514_1060.